We begin with the raw amino-acid sequence, 537 residues long: Atrial natriuretic peptide receptor 3 (537 aa).

Positions 1-20 (MPSLLVLTFSACVLLGWALL) are cleaved as a signal peptide. A propeptide spanning residues 21 to 41 (ADCTGGGGSGGAGPGRGRRER) is cleaved from the precursor. Topologically, residues 42–477 (EALPPQKIEV…PCKASGGLEE (436 aa)) are extracellular. A glycan (N-linked (GlcNAc...) asparagine) is linked at asparagine 82. 2 disulfides stabilise this stretch: cysteine 104-cysteine 132 and cysteine 209-cysteine 257. N-linked (GlcNAc...) asparagine glycosylation is found at asparagine 289 and asparagine 390. Residues 478–500 (SAVTGIVVGALLGAGLLMAFYFF) form a helical membrane-spanning segment. Residues 501-537 (RKKYRITIERRNQQEESNVGKHRELREDSIRSHFSVA) lie on the Cytoplasmic side of the membrane.

The protein belongs to the ANF receptor family. As to quaternary structure, homodimer; disulfide-linked. Interacts with OSTN.

The protein resides in the cell membrane. In terms of biological role, receptor for the natriuretic peptide hormones, binding with similar affinities atrial natriuretic peptide NPPA/ANP, brain natriuretic peptide NPPB/BNP, and C-type natriuretic peptide NPPC/CNP. May function as a clearance receptor for NPPA, NPPB and NPPC, regulating their local concentrations and effects. Acts as a regulator of osteoblast differentiation and bone growth by binding to its ligand osteocrin, thereby preventing binding between NPR3/NPR-C and natriuretic peptides, leading to increase cGMP production. This chain is Atrial natriuretic peptide receptor 3 (NPR3), found in Bos taurus (Bovine).